The following is a 732-amino-acid chain: Ubiquitin carboxyl-terminal hydrolase 21 (732 aa).

Pro residues predominate over residues methionine 1–serine 10. The interval methionine 1 to leucine 111 is disordered. Polar residues-rich tracts occupy residues asparagine 11–threonine 31 and valine 38–alanine 53. Low complexity predominate over residues serine 55–lysine 69. The USP domain maps to alanine 163–glutamate 469. Cysteine 172 (nucleophile) is an active-site residue. Histidine 428 functions as the Proton acceptor in the catalytic mechanism. A disordered region spans residues lysine 534 to leucine 732. Positions serine 540 to alanine 551 are enriched in low complexity. Positions alanine 583–serine 609 are enriched in basic and acidic residues. The span at lysine 719–leucine 732 shows a compositional bias: basic residues.

This sequence belongs to the peptidase C19 family.

The catalysed reaction is Thiol-dependent hydrolysis of ester, thioester, amide, peptide and isopeptide bonds formed by the C-terminal Gly of ubiquitin (a 76-residue protein attached to proteins as an intracellular targeting signal).. Functionally, recognizes and hydrolyzes the peptide bond at the C-terminal Gly of ubiquitin. Involved in the processing of poly-ubiquitin precursors as well as that of ubiquitinated proteins. The chain is Ubiquitin carboxyl-terminal hydrolase 21 (UBP21) from Arabidopsis thaliana (Mouse-ear cress).